We begin with the raw amino-acid sequence, 30 residues long: GIPCGESCIFIPCITTVVGCSCSNKVCYDN.

Residues 1–30 (GIPCGESCIFIPCITTVVGCSCSNKVCYDN) constitute a cross-link (cyclopeptide (Gly-Asn)). 3 cysteine pairs are disulfide-bonded: C4–C20, C8–C22, and C13–C27.

Post-translationally, this is a cyclic peptide. As to expression, detected in seeds (at protein level).

In terms of biological role, probably participates in a plant defense mechanism. This Pigea enneasperma (Spade flower) protein is Cyclotide hyen-K.